Consider the following 925-residue polypeptide: Protein translocase subunit SecA (925 aa).

Residues Gln-87, 105–109 (GEGKT), and Asp-515 each bind ATP. Cys-909, Cys-911, Cys-920, and His-921 together coordinate Zn(2+).

Belongs to the SecA family. In terms of assembly, monomer and homodimer. Part of the essential Sec protein translocation apparatus which comprises SecA, SecYEG and auxiliary proteins SecDF-YajC and YidC. Zn(2+) serves as cofactor.

It localises to the cell inner membrane. The protein resides in the cytoplasm. It carries out the reaction ATP + H2O + cellular proteinSide 1 = ADP + phosphate + cellular proteinSide 2.. Functionally, part of the Sec protein translocase complex. Interacts with the SecYEG preprotein conducting channel. Has a central role in coupling the hydrolysis of ATP to the transfer of proteins into and across the cell membrane, serving both as a receptor for the preprotein-SecB complex and as an ATP-driven molecular motor driving the stepwise translocation of polypeptide chains across the membrane. The protein is Protein translocase subunit SecA of Cupriavidus taiwanensis (strain DSM 17343 / BCRC 17206 / CCUG 44338 / CIP 107171 / LMG 19424 / R1) (Ralstonia taiwanensis (strain LMG 19424)).